Here is a 195-residue protein sequence, read N- to C-terminus: Phosphoheptose isomerase (195 aa).

The SIS domain maps to 36 to 195 (LAHCLLSDGK…DLVDHQLFGE (160 aa)). 51–53 (NGG) lines the substrate pocket. Residues His60 and Glu64 each coordinate Zn(2+). Residues Glu64, 93–94 (ND), 119–121 (STS), Ser124, and Gln174 each bind substrate. Zn(2+)-binding residues include Gln174 and His182.

The protein belongs to the SIS family. GmhA subfamily. As to quaternary structure, homotetramer. Zn(2+) is required as a cofactor.

The protein resides in the cytoplasm. The catalysed reaction is 2 D-sedoheptulose 7-phosphate = D-glycero-alpha-D-manno-heptose 7-phosphate + D-glycero-beta-D-manno-heptose 7-phosphate. It participates in carbohydrate biosynthesis; D-glycero-D-manno-heptose 7-phosphate biosynthesis; D-glycero-alpha-D-manno-heptose 7-phosphate and D-glycero-beta-D-manno-heptose 7-phosphate from sedoheptulose 7-phosphate: step 1/1. Catalyzes the isomerization of sedoheptulose 7-phosphate in D-glycero-D-manno-heptose 7-phosphate. The polypeptide is Phosphoheptose isomerase (Methylococcus capsulatus (strain ATCC 33009 / NCIMB 11132 / Bath)).